The following is a 130-amino-acid chain: Anti-adapter protein IraD (130 aa).

Belongs to the GpW/Gp25 family. IraD subfamily. In terms of assembly, interacts with RssB.

It localises to the cytoplasm. Inhibits RpoS proteolysis by regulating RssB activity, thereby increasing the stability of the sigma stress factor RpoS during oxidative stress. Its effect on RpoS stability is due to its interaction with RssB, which probably blocks the interaction of RssB with RpoS, and the consequent delivery of the RssB-RpoS complex to the ClpXP protein degradation pathway. This chain is Anti-adapter protein IraD, found in Shigella boydii serotype 4 (strain Sb227).